The primary structure comprises 1322 residues: Ice nucleation protein InaA (1322 aa).

The octapeptide periodicity stretch occupies residues Ala-162 to Ile-1281. Polar residues-rich tracts occupy residues Ser-271 to Ser-302, Thr-327 to Ser-350, Gly-373 to Ser-398, and Thr-423 to Ser-446. Disordered stretches follow at residues Ser-271 to Asp-303, Thr-327 to Ser-358, Tyr-372 to Asp-399, and Thr-423 to Leu-448.

The protein belongs to the bacterial ice nucleation protein family.

Its subcellular location is the cell outer membrane. In terms of biological role, ice nucleation proteins enable bacteria to nucleate crystallization in supercooled water. In Pantoea ananas (Erwinia uredovora), this protein is Ice nucleation protein InaA (inaA).